A 556-amino-acid chain; its full sequence is Potassium-transporting ATPase potassium-binding subunit (556 aa).

10 helical membrane passes run 6-26, 65-85, 133-153, 176-196, 249-269, 283-303, 378-398, 419-439, 483-503, and 526-546; these read AGLIFLAVLVAALVAVHVPLG, GVLAFSSVSIIFLFVLQLVQG, GLAVQNFVSAAVGMAVAVALV, LRILLPISIVGAVLLVAGGAI, PTAWTNWLEVFLILVIGFSLP, YAIASVMASLYLLSTGFMLWF, GLYGMLVLAVITVFVAGLMVG, YFLVTPLIVLTGTAIAMALPG, ALGLAMAFGRFLPIVLVLALA, and FVGMVAGVTLIVVALTFLPML.

This sequence belongs to the KdpA family. In terms of assembly, the system is composed of three essential subunits: KdpA, KdpB and KdpC.

The protein localises to the cell membrane. In terms of biological role, part of the high-affinity ATP-driven potassium transport (or Kdp) system, which catalyzes the hydrolysis of ATP coupled with the electrogenic transport of potassium into the cytoplasm. This subunit binds the extracellular potassium ions and delivers the ions to the membrane domain of KdpB through an intramembrane tunnel. In Mycolicibacterium paratuberculosis (strain ATCC BAA-968 / K-10) (Mycobacterium paratuberculosis), this protein is Potassium-transporting ATPase potassium-binding subunit.